We begin with the raw amino-acid sequence, 863 residues long: Leucine--tRNA ligase (863 aa).

Residues 42–52 (PYPSGRLHMGH) carry the 'HIGH' region motif. A 'KMSKS' region motif is present at residues 622-626 (KMSKS). Position 625 (Lys-625) interacts with ATP.

This sequence belongs to the class-I aminoacyl-tRNA synthetase family.

It is found in the cytoplasm. The enzyme catalyses tRNA(Leu) + L-leucine + ATP = L-leucyl-tRNA(Leu) + AMP + diphosphate. The sequence is that of Leucine--tRNA ligase from Shewanella frigidimarina (strain NCIMB 400).